The chain runs to 388 residues: Succinate--CoA ligase [ADP-forming] subunit beta (388 aa).

The region spanning 9–244 (KQLFARYGLP…QSQEDPREAQ (236 aa)) is the ATP-grasp domain. ATP contacts are provided by residues Lys46, 53-55 (GRG), Glu99, Thr102, and Glu107. Residues Asn199 and Asp213 each coordinate Mg(2+). Substrate-binding positions include Asn264 and 321-323 (GIV).

The protein belongs to the succinate/malate CoA ligase beta subunit family. Heterotetramer of two alpha and two beta subunits. Mg(2+) serves as cofactor.

It catalyses the reaction succinate + ATP + CoA = succinyl-CoA + ADP + phosphate. It carries out the reaction GTP + succinate + CoA = succinyl-CoA + GDP + phosphate. It functions in the pathway carbohydrate metabolism; tricarboxylic acid cycle; succinate from succinyl-CoA (ligase route): step 1/1. In terms of biological role, succinyl-CoA synthetase functions in the citric acid cycle (TCA), coupling the hydrolysis of succinyl-CoA to the synthesis of either ATP or GTP and thus represents the only step of substrate-level phosphorylation in the TCA. The beta subunit provides nucleotide specificity of the enzyme and binds the substrate succinate, while the binding sites for coenzyme A and phosphate are found in the alpha subunit. The polypeptide is Succinate--CoA ligase [ADP-forming] subunit beta (Salmonella choleraesuis (strain SC-B67)).